Reading from the N-terminus, the 959-residue chain is Glycine dehydrogenase (decarboxylating) (959 aa).

An N6-(pyridoxal phosphate)lysine modification is found at Lys708.

Belongs to the GcvP family. As to quaternary structure, the glycine cleavage system is composed of four proteins: P, T, L and H. Pyridoxal 5'-phosphate serves as cofactor.

The enzyme catalyses N(6)-[(R)-lipoyl]-L-lysyl-[glycine-cleavage complex H protein] + glycine + H(+) = N(6)-[(R)-S(8)-aminomethyldihydrolipoyl]-L-lysyl-[glycine-cleavage complex H protein] + CO2. Functionally, the glycine cleavage system catalyzes the degradation of glycine. The P protein binds the alpha-amino group of glycine through its pyridoxal phosphate cofactor; CO(2) is released and the remaining methylamine moiety is then transferred to the lipoamide cofactor of the H protein. The chain is Glycine dehydrogenase (decarboxylating) from Yersinia enterocolitica serotype O:8 / biotype 1B (strain NCTC 13174 / 8081).